We begin with the raw amino-acid sequence, 384 residues long: MTEGVGLPLWLLAELTYRCPLQCPYCSNPLDYAQHKNELTTQEWFDVFDQARQMGAVQLGFSGGEPLVRQDLEQLVAHAHQLGFYTNLITSGMGLTEQRISHLKQAGLDHIQISFQASDPVVNDALAGSKHAFEQKYEMCRLVKKYDYPMVLNFVIHRHNIDQIDKIIELCLELNADTVELAICQFYGWAFLNRQGLLPTQEQLIRAERITNEYREKLKAQNHPCKLIFVVPDYYEERPKACMNGWGKIFFTIAPDGMALPCHAARQLPISFPNVREQSLSKIWYESTGFNHFRGDAWMPEGCRSCPDKDRDFGGCRCQAYMLTGDASNADPVCGKSLYHQLIEQARAESEIDSSLGKLVFRNSRNSKQFTVQQNIPVQNIVDD.

The 216-residue stretch at 5-220 folds into the Radical SAM core domain; sequence VGLPLWLLAE…TNEYREKLKA (216 aa). Residues cysteine 19, cysteine 23, and cysteine 26 each contribute to the [4Fe-4S] cluster site.

It belongs to the radical SAM superfamily. PqqE family. As to quaternary structure, interacts with PqqD. The interaction is necessary for activity of PqqE. The cofactor is [4Fe-4S] cluster.

It carries out the reaction [PQQ precursor protein] + S-adenosyl-L-methionine = E-Y cross-linked-[PQQ precursor protein] + 5'-deoxyadenosine + L-methionine + H(+). It participates in cofactor biosynthesis; pyrroloquinoline quinone biosynthesis. In terms of biological role, catalyzes the cross-linking of a glutamate residue and a tyrosine residue in the PqqA protein as part of the biosynthesis of pyrroloquinoline quinone (PQQ). The sequence is that of PqqA peptide cyclase from Acinetobacter baumannii (strain ACICU).